The following is a 718-amino-acid chain: Pullulanase (718 aa).

The active-site Nucleophile is the Asp406. Glu435 (proton donor) is an active-site residue.

It belongs to the glycosyl hydrolase 13 family.

It catalyses the reaction Hydrolysis of (1-&gt;6)-alpha-D-glucosidic linkages in pullulan, amylopectin and glycogen, and in the alpha- and beta-limit dextrins of amylopectin and glycogen.. The chain is Pullulanase (amyX) from Bacillus subtilis (strain 168).